A 101-amino-acid polypeptide reads, in one-letter code: Urease subunit beta (101 aa).

Belongs to the urease beta subunit family. Heterotrimer of UreA (gamma), UreB (beta) and UreC (alpha) subunits. Three heterotrimers associate to form the active enzyme.

It localises to the cytoplasm. It catalyses the reaction urea + 2 H2O + H(+) = hydrogencarbonate + 2 NH4(+). The protein operates within nitrogen metabolism; urea degradation; CO(2) and NH(3) from urea (urease route): step 1/1. In Haemophilus influenzae (strain 86-028NP), this protein is Urease subunit beta.